Reading from the N-terminus, the 106-residue chain is Large ribosomal subunit protein P2 (106 aa).

Positions 80 to 106 (AAAAPAKKVVEEKKEESDDDMGMGLFD) are disordered.

The protein belongs to the eukaryotic ribosomal protein P1/P2 family. In terms of assembly, P1 and P2 exist as dimers at the large ribosomal subunit. Phosphorylated.

Functionally, plays an important role in the elongation step of protein synthesis. This chain is Large ribosomal subunit protein P2 (rplp2), found in Dictyostelium discoideum (Social amoeba).